The sequence spans 1487 residues: Protein clueless (1487 aa).

Disordered regions lie at residues 1 to 94 (MALE…NGDA) and 110 to 140 (GATA…EAAA). A compositionally biased stretch (basic residues) spans 56-65 (TKKKGKKNRN). Over residues 111–126 (ATAAAGATEAAAEVGS) the composition is skewed to low complexity. Position 284 is a phosphoserine (Ser284). The Clu domain occupies 438–680 (RAEDAFSSKL…RTFPPDVNFL (243 aa)). The span at 739-785 (QAEKELPSITEKQEEPEKEQAEKSSAEQPEKEKEKEKDKEDEQKESK) shows a compositional bias: basic and acidic residues. Disordered regions lie at residues 739–794 (QAEK…TKSA) and 980–1040 (VSSE…TAST). The span at 988-1005 (KQSRNNGGKHNKHNKSNK) shows a compositional bias: basic residues. A compositionally biased stretch (polar residues) spans 1009–1019 (PQSTSAAAATQ). Over residues 1020-1040 (NGHSSTAANGSANSAANTAST) the composition is skewed to low complexity. 3 TPR repeats span residues 1140–1173 (AYNF…LNNV), 1266–1299 (ALID…NLKY), and 1301–1334 (GNKA…EKET). The tract at residues 1456 to 1487 (DTEQPKEGSEVEGATATQLTNGSEDSTTTVSS) is disordered. The segment covering 1470–1487 (TATQLTNGSEDSTTTVSS) has biased composition (polar residues).

Belongs to the CLU family.

It localises to the cytoplasm. MRNA-binding protein involved in proper cytoplasmic distribution of mitochondria. The polypeptide is Protein clueless (Drosophila mojavensis (Fruit fly)).